The primary structure comprises 296 residues: ATP synthase gamma chain (296 aa).

It belongs to the ATPase gamma chain family. F-type ATPases have 2 components, CF(1) - the catalytic core - and CF(0) - the membrane proton channel. CF(1) has five subunits: alpha(3), beta(3), gamma(1), delta(1), epsilon(1). CF(0) has three main subunits: a, b and c.

It is found in the cell inner membrane. Functionally, produces ATP from ADP in the presence of a proton gradient across the membrane. The gamma chain is believed to be important in regulating ATPase activity and the flow of protons through the CF(0) complex. The sequence is that of ATP synthase gamma chain from Methylorubrum extorquens (strain CM4 / NCIMB 13688) (Methylobacterium extorquens).